The sequence spans 197 residues: MRTATIKRKTKETDIEVTVNLDGTGVSNIATGIGFFDHMLDLLARHSRIDLTVKAVGDLHIDHHHTTEDTGIALGQAVKQALGTMAGITRYAGVHMPMDETLSRVVIDISGRPVLVFKVDFPRDKIGEFDTELVREWFQAFAMNASVTLHVETLYGDNSHHIAESCFKGLARALRAAVAIDPKAAGEIPSTKGSLGG.

Belongs to the imidazoleglycerol-phosphate dehydratase family.

The protein localises to the cytoplasm. The catalysed reaction is D-erythro-1-(imidazol-4-yl)glycerol 3-phosphate = 3-(imidazol-4-yl)-2-oxopropyl phosphate + H2O. It functions in the pathway amino-acid biosynthesis; L-histidine biosynthesis; L-histidine from 5-phospho-alpha-D-ribose 1-diphosphate: step 6/9. This is Imidazoleglycerol-phosphate dehydratase from Bradyrhizobium diazoefficiens (strain JCM 10833 / BCRC 13528 / IAM 13628 / NBRC 14792 / USDA 110).